A 1207-amino-acid chain; its full sequence is Disease resistance protein RPP2B (1207 aa).

Residues 15-180 (CEFDVFVSFR…EIVKNTFRML (166 aa)) form the TIR domain. The active site involves Glu89. The NB-ARC domain occupies 201-445 (ELEKLLMFDN…FLDIACFFRS (245 aa)). LRR repeat units follow at residues 607-630 (PKEL…EKNT), 653-676 (AKNL…VKQM), 677-699 (NELI…GFKI), 720-743 (SESI…IESL), 744-767 (HSLI…LYKL), 769-791 (SLQE…KEKM), 792-815 (ECLE…CLSN), 840-862 (NSFL…KFSS), and 863-886 (LRSL…IEKL).

Belongs to the disease resistance TIR-NB-LRR family.

It catalyses the reaction NAD(+) + H2O = ADP-D-ribose + nicotinamide + H(+). Disease resistance protein that cooperates with RPP2A to confer resistance to Hyaloperonospora parasitica isolate Cala2. This is Disease resistance protein RPP2B from Arabidopsis thaliana (Mouse-ear cress).